Here is a 236-residue protein sequence, read N- to C-terminus: MKGEALKIIEEVLAQGRTAMVEYEAKQVLKAYGLPVPEEKLAKTLDEALKYAEEIGYPVAMKLMSPQILHKSDAKVVMLNIKSPEELKKKWEEIHENARKYRPDAEIFGVLIAPMLKPGREVIIGVTEDPQFGHAIMFGLGGIFVEILKDVTFRIIPITEKDARKMITEIKAYPILAGARGEEPADIEAIVDMLLKVSKLVDDLKDYIKEMDLNPVFVYRKGEGAVVVDARIILKG.

One can recognise an ATP-grasp domain in the interval 26–62 (KQVLKAYGLPVPEEKLAKTLDEALKYAEEIGYPVAMK). 52–63 (AEEIGYPVAMKL) lines the ATP pocket.

Belongs to the acetate CoA ligase beta subunit family. Heterotetramer of two alpha and two beta subunits.

It carries out the reaction acetate + ATP + CoA = acetyl-CoA + ADP + phosphate. Its function is as follows. Catalyzes the reversible formation of acetate and ATP from acetyl-CoA by using ADP and phosphate. Can use other substrates such as phenylacetyl-CoA, indoleacetyl-CoA and isobutyryl-CoA, but not succinyl-CoA. Seems to be involved primarily in the degradation of aryl-CoA esters to the corresponding acids. Participates in the conversion of acetyl-CoA to acetate and in the degradation of branched-chain amino acids via branched-chain-acyl-CoA esters. The sequence is that of Acetate--CoA ligase [ADP-forming] II subunit beta from Pyrococcus furiosus (strain ATCC 43587 / DSM 3638 / JCM 8422 / Vc1).